A 296-amino-acid polypeptide reads, in one-letter code: tRNA dimethylallyltransferase (296 aa).

G11–T18 provides a ligand contact to ATP. T13–T18 is a binding site for substrate. Positions D36–Q39 are interaction with substrate tRNA.

The protein belongs to the IPP transferase family. Monomer. Requires Mg(2+) as cofactor.

The catalysed reaction is adenosine(37) in tRNA + dimethylallyl diphosphate = N(6)-dimethylallyladenosine(37) in tRNA + diphosphate. In terms of biological role, catalyzes the transfer of a dimethylallyl group onto the adenine at position 37 in tRNAs that read codons beginning with uridine, leading to the formation of N6-(dimethylallyl)adenosine (i(6)A). In Streptococcus agalactiae serotype III (strain NEM316), this protein is tRNA dimethylallyltransferase.